The following is a 577-amino-acid chain: Cell pattern formation-associated protein stuA (577 aa).

The interval Met1–Gly41 is disordered. Polar residues predominate over residues Ser19–Gly28. One can recognise an HTH APSES-type domain in the interval Arg111 to Pro217. Residues Gly145 to Glu166 constitute a DNA-binding region (H-T-H motif). 2 disordered regions span residues Ala228–Ser487 and Gln518–Arg577. 2 stretches are compositionally biased toward polar residues: residues Ser238–Pro251 and Ala319–Met333. The span at Pro334–Pro350 shows a compositional bias: low complexity. Over residues Gly351–Gly364 the composition is skewed to polar residues. Basic and acidic residues predominate over residues Ala390–Val399. Positions Thr465–Pro479 are enriched in low complexity. Positions Lys526–Arg552 are nuclear localization domain.

This sequence belongs to the EFG1/PHD1/stuA family.

It localises to the nucleus. Functionally, transcription factor that regulates asexual reproduction. Binds the StuA-response elements (StRE) with the consensus sequence 5'-(A/T)CGCG(T/A)N(A/C)-3' at the promoters of target genes. This chain is Cell pattern formation-associated protein stuA, found in Dothistroma septosporum (strain NZE10 / CBS 128990) (Red band needle blight fungus).